The sequence spans 130 residues: Methylglyoxal synthase (130 aa).

The region spanning 1–130 (MSKPRIALIA…DLARNMQDVC (130 aa)) is the MGS-like domain. Residues H11, K15, 37–40 (TGTT), and 57–58 (SG) each bind substrate. The Proton donor/acceptor role is filled by D63. H90 serves as a coordination point for substrate.

This sequence belongs to the methylglyoxal synthase family.

It carries out the reaction dihydroxyacetone phosphate = methylglyoxal + phosphate. Its function is as follows. Catalyzes the formation of methylglyoxal from dihydroxyacetone phosphate. This Burkholderia lata (strain ATCC 17760 / DSM 23089 / LMG 22485 / NCIMB 9086 / R18194 / 383) protein is Methylglyoxal synthase.